The chain runs to 106 residues: Stress-responsive protein 1 (106 aa).

The protein localises to the mitochondrion. Functionally, stress-responsive protein that may play a role in regulation of cell cycle. This chain is Stress-responsive protein 1 (sro1), found in Schizosaccharomyces pombe (strain 972 / ATCC 24843) (Fission yeast).